The sequence spans 339 residues: NADP-dependent dehydrogenase M3 (339 aa).

NADP(+) is bound by residues S49, I51, D93, Y206, K210, I240, and Q244. The active-site Proton acceptor is Y206. Catalysis depends on K210, which acts as the Lowers pKa of active site Tyr.

It belongs to the short-chain dehydrogenases/reductases (SDR) family. In terms of assembly, homodimer.

It is found in the cytoplasm. It localises to the cytosol. It participates in secondary metabolite biosynthesis. In terms of biological role, NADP-dependent dehydrogenase; part of the gene cluster that mediates the biosynthesis of squalestatin S1 (SQS1, also known as zaragozic acid A), a heavily oxidized fungal polyketide that offers potent cholesterol lowering activity by targeting squalene synthase (SS). SQS1 is composed of a 2,8-dioxobicyclic[3.2.1]octane-3,4,5-tricarboxyclic acid core that is connected to two lipophilic polyketide arms. These initial steps feature the priming of an unusual benzoic acid starter unit onto the highly reducing polyketide synthase pks2, followed by oxaloacetate extension and product release to generate a tricarboxylic acid containing product. The phenylalanine ammonia lyase (PAL) M7 and the acyl-CoA ligase M9 are involved in transforming phenylalanine into benzoyl-CoA. The citrate synthase-like protein R3 is involved in connecting the C-alpha-carbons of the hexaketide chain and oxaloacetate to afford the tricarboxylic acid unit. The potential hydrolytic enzymes, M8 and M10, are in close proximity to pks2 and may participate in product release. On the other side, the tetraketide arm is synthesized by a the squalestatin tetraketide synthase pks1 and enzymatically esterified to the core in the last biosynthetic step, by the acetyltransferase M4. The biosynthesis of the tetraketide must involve 3 rounds of chain extension. After the first and second rounds methyl-transfer occurs, and in all rounds of extension the ketoreductase and dehydratase are active. The enoyl reductase and C-MeT of pks1 are not active in the final round of extension. The acetyltransferase M4 appears to have a broad substrate selectivity for its acyl CoA substrate, allowing the in vitro synthesis of novel squalestatins. The biosynthesis of SQS1 requires several oxidative steps likely performed by oxidoreductases M1, R1 and R2. Finally, in support of the identification of the cluster as being responsible for SQS1 production, the cluster contains a gene encoding a putative squalene synthase (SS) R6, suggesting a likely mechanism for self-resistance. This is NADP-dependent dehydrogenase M3 from Phoma sp. (strain ATCC 20986 / MF5453).